We begin with the raw amino-acid sequence, 745 residues long: Eukaryotic translation initiation factor 3 subunit B (745 aa).

Positions 41 to 129 constitute an RRM domain; it reads DVIVIEGVPV…HRFSVHRFTD (89 aa). WD repeat units lie at residues 189–230, 251–293, 303–344, and 580–625; these read EHSR…RFMR, WSHE…RSFP, GQLK…LLEK, and GEHY…LQKH. The stretch at 644-745 forms a coiled coil; it reads GKDEQKRVRK…IIEETEEVLA (102 aa).

This sequence belongs to the eIF-3 subunit B family. In terms of assembly, component of the eukaryotic translation initiation factor 3 (eIF-3) complex.

The protein resides in the cytoplasm. RNA-binding component of the eukaryotic translation initiation factor 3 (eIF-3) complex, which is involved in protein synthesis of a specialized repertoire of mRNAs and, together with other initiation factors, stimulates binding of mRNA and methionyl-tRNAi to the 40S ribosome. The eIF-3 complex specifically targets and initiates translation of a subset of mRNAs involved in cell proliferation. This chain is Eukaryotic translation initiation factor 3 subunit B, found in Mycosarcoma maydis (Corn smut fungus).